The following is an 84-amino-acid chain: U8-theraphotoxin-Hhn1b (84 aa).

An N-terminal signal peptide occupies residues 1–21 (MKVVLIVCLVWVMAMMELVSC). Cystine bridges form between Cys23-Cys35, Cys29-Cys44, Cys34-Cys67, and Cys54-Cys75.

This sequence belongs to the AVIT (prokineticin) family. As to expression, expressed by the venom gland.

It is found in the secreted. The chain is U8-theraphotoxin-Hhn1b from Cyriopagopus hainanus (Chinese bird spider).